A 313-amino-acid polypeptide reads, in one-letter code: ADP-L-glycero-D-manno-heptose-6-epimerase (313 aa).

NADP(+) is bound by residues 10–11 (FI), 31–32 (DD), Arg38, Lys53, 75–79 (EGACS), and Asn92. Tyr139 acts as the Proton acceptor in catalysis. Residue Lys143 participates in NADP(+) binding. Asn168 lines the substrate pocket. Residues Val169 and Lys177 each contribute to the NADP(+) site. Lys177 acts as the Proton acceptor in catalysis. Residues Lys179, His186, 200–203 (FEGW), Arg213, and Tyr277 contribute to the substrate site.

Belongs to the NAD(P)-dependent epimerase/dehydratase family. HldD subfamily. In terms of assembly, homopentamer. It depends on NADP(+) as a cofactor.

It carries out the reaction ADP-D-glycero-beta-D-manno-heptose = ADP-L-glycero-beta-D-manno-heptose. The protein operates within nucleotide-sugar biosynthesis; ADP-L-glycero-beta-D-manno-heptose biosynthesis; ADP-L-glycero-beta-D-manno-heptose from D-glycero-beta-D-manno-heptose 7-phosphate: step 4/4. Catalyzes the interconversion between ADP-D-glycero-beta-D-manno-heptose and ADP-L-glycero-beta-D-manno-heptose via an epimerization at carbon 6 of the heptose. The protein is ADP-L-glycero-D-manno-heptose-6-epimerase of Marinobacter nauticus (strain ATCC 700491 / DSM 11845 / VT8) (Marinobacter aquaeolei).